We begin with the raw amino-acid sequence, 1356 residues long: Vascular endothelial growth factor receptor 2 (1356 aa).

An N-terminal signal peptide occupies residues 1 to 19 (MQSKVLLAVALWLCVETRA). The Extracellular portion of the chain corresponds to 20–764 (ASVGLPSVSL…EGAQEKTNLE (745 aa)). N-linked (GlcNAc...) asparagine glycans are attached at residues asparagine 46, asparagine 66, asparagine 96, asparagine 143, asparagine 158, and asparagine 245. 7 consecutive Ig-like C2-type domains span residues 46 to 110 (NTTL…ETDL), 141 to 207 (NKNK…INDE), 224 to 320 (YDVV…KNST), 328 to 414 (PFVA…HVVS), 421 to 548 (PQIG…FHVT), 551 to 660 (PEIT…RQLT), and 667 to 753 (PTIT…AFFI). A disulfide bridge connects residues cysteine 53 and cysteine 103. Cysteine 150 and cysteine 200 form a disulfide bridge. Cysteine 246 and cysteine 307 are disulfide-bonded. Asparagine 318, asparagine 374, asparagine 395, asparagine 511, asparagine 523, asparagine 580, asparagine 613, asparagine 619, asparagine 631, asparagine 675, asparagine 704, and asparagine 721 each carry an N-linked (GlcNAc...) asparagine glycan. 2 cysteine pairs are disulfide-bonded: cysteine 445–cysteine 530 and cysteine 571–cysteine 642. A disulfide bridge connects residues cysteine 688 and cysteine 737. The helical transmembrane segment at 765 to 785 (IIILVGTAVIAMFFWLLLVII) threads the bilayer. Over 786–1356 (LRTVKRANGG…SGTTLSSPPV (571 aa)) the chain is Cytoplasmic. Tyrosine 801 carries the phosphotyrosine modification. Positions 834 to 1162 (LKLGKPLGRG…FSELVEHLGN (329 aa)) constitute a Protein kinase domain. ATP-binding positions include 840 to 848 (LGRGAFGQV) and lysine 868. Tyrosine 951 is subject to Phosphotyrosine; by autocatalysis. Residues serine 982 and serine 984 each carry the phosphoserine modification. At tyrosine 996 the chain carries Phosphotyrosine; by autocatalysis. A disulfide bridge links cysteine 1024 with cysteine 1045. The Proton acceptor role is filled by aspartate 1028. A phosphotyrosine; by autocatalysis mark is found at tyrosine 1054, tyrosine 1059, tyrosine 1175, and tyrosine 1214. Residues serine 1231 and serine 1235 each carry the phosphoserine modification. The residue at position 1238 (threonine 1238) is a Phosphothreonine. The disordered stretch occupies residues 1274–1318 (DRTKLSPSFGGMVPSKSRESVASEGSNQTSGYQSGYHSDDTDTTV). Residues 1296 to 1309 (SEGSNQTSGYQSGY) show a composition bias toward polar residues. Tyrosine 1305, tyrosine 1309, and tyrosine 1319 each carry phosphotyrosine; by autocatalysis.

Belongs to the protein kinase superfamily. Tyr protein kinase family. CSF-1/PDGF receptor subfamily. As to quaternary structure, homodimer in the presence of bound dimeric VEGFA, VEGFC or VEGFD ligands; monomeric in the absence of bound ligands. Can also form heterodimers with FLT1/VEGFR1 and KDR/VEGFR2. Interacts (tyrosine phosphorylated) with LFYN, NCK1, PLCG1. Interacts (tyrosine-phosphorylated active form preferentially) with DAB2IP (via C2 domain and active form preferentially); the interaction occurs at the late phase of VEGFA response and inhibits KDR/VEGFR2 activity. Interacts with SHBSH2D2A/TSAD, GRB2, MYOF, CBL and PDCD6. Interacts (via C-terminus domain) with ERN1 (via kinase domain); the interaction is facilitated in a XBP1 isoform 1- and vascular endothelial growth factor (VEGF)-dependent manner in endothelial cells. Interacts (via juxtamembrane region) with chaperone PDCL3 (via thioredoxin fold region); the interaction leads to increased KDR/VEGFR2 abundance through inhibition of its ubiquitination and degradation. Interacts (tyrosine phosphorylated) with CCDC88A/GIV (via SH2-like region); binding requires autophosphorylation of the KDR/VEGFR2 C-terminal region. Interacts with isoform 2 of BSG. Interacts with SLC31A1; this interaction is induced upon VEGFA stimulation leading to SLC31A1 and KDR subsequent co-internalization to early endosomes, thereby activating KDR downstream signaling in endothelial cells. (Microbial infection) Interacts with HIV-1 Tat. Post-translationally, N-glycosylated. Ubiquitinated. Tyrosine phosphorylation of the receptor promotes its poly-ubiquitination, leading to its degradation via the proteasome or lysosomal proteases. In terms of processing, autophosphorylated on tyrosine residues upon ligand binding. Autophosphorylation occurs in trans, i.e. one subunit of the dimeric receptor phosphorylates tyrosine residues on the other subunit. Phosphorylation at Tyr-951 is important for interaction with SH2D2A/TSAD and VEGFA-mediated reorganization of the actin cytoskeleton. Phosphorylation at Tyr-1175 is important for interaction with PLCG1 and SHB. Phosphorylation at Tyr-1214 is important for interaction with NCK1 and FYN. Dephosphorylated by PTPRB. Dephosphorylated by PTPRJ at Tyr-951, Tyr-996, Tyr-1054, Tyr-1059, Tyr-1175 and Tyr-1214. Post-translationally, the inhibitory disulfide bond between Cys-1024 and Cys-1045 may serve as a specific molecular switch for H(2)S-induced modification that regulates KDR/VEGFR2 function. As to expression, detected in cornea (at protein level). Widely expressed.

It localises to the cell junction. The protein resides in the endoplasmic reticulum. It is found in the cell membrane. The protein localises to the cytoplasm. Its subcellular location is the nucleus. It localises to the cytoplasmic vesicle. The protein resides in the early endosome. It is found in the secreted. The enzyme catalyses L-tyrosyl-[protein] + ATP = O-phospho-L-tyrosyl-[protein] + ADP + H(+). With respect to regulation, present in an inactive conformation in the absence of bound ligand. Binding of VEGFA, VEGFC or VEGFD leads to dimerization and activation by autophosphorylation on tyrosine residues. Inhibited by the small molecule PTK inhibitor SU5614 ((3Z)-5-Chloro-3-[(3,5-dimethyl-1H-pyrrol-2-yl)methylene]-1,3-dihydro-2H-indol-2-one). May be regulated by hydrogen sulfide (H(2)S) levels via a H(2)S-sensitive intracellular disulfide bond. Tyrosine-protein kinase that acts as a cell-surface receptor for VEGFA, VEGFC and VEGFD. Plays an essential role in the regulation of angiogenesis, vascular development, vascular permeability, and embryonic hematopoiesis. Promotes proliferation, survival, migration and differentiation of endothelial cells. Promotes reorganization of the actin cytoskeleton. Isoforms lacking a transmembrane domain, such as isoform 2 and isoform 3, may function as decoy receptors for VEGFA, VEGFC and/or VEGFD. Isoform 2 plays an important role as negative regulator of VEGFA- and VEGFC-mediated lymphangiogenesis by limiting the amount of free VEGFA and/or VEGFC and preventing their binding to FLT4. Modulates FLT1 and FLT4 signaling by forming heterodimers. Binding of vascular growth factors to isoform 1 leads to the activation of several signaling cascades. Activation of PLCG1 leads to the production of the cellular signaling molecules diacylglycerol and inositol 1,4,5-trisphosphate and the activation of protein kinase C. Mediates activation of MAPK1/ERK2, MAPK3/ERK1 and the MAP kinase signaling pathway, as well as of the AKT1 signaling pathway. Mediates phosphorylation of PIK3R1, the regulatory subunit of phosphatidylinositol 3-kinase, reorganization of the actin cytoskeleton and activation of PTK2/FAK1. Required for VEGFA-mediated induction of NOS2 and NOS3, leading to the production of the signaling molecule nitric oxide (NO) by endothelial cells. Phosphorylates PLCG1. Promotes phosphorylation of FYN, NCK1, NOS3, PIK3R1, PTK2/FAK1 and SRC. The polypeptide is Vascular endothelial growth factor receptor 2 (Homo sapiens (Human)).